Consider the following 900-residue polypeptide: Nonribosomal peptide synthetase AMT10 (900 aa).

The adenylation stretch occupies residues 284–686; sequence KQAQQNPAAM…ARRNGYIKLR (403 aa). The 77-residue stretch at 824 to 900 folds into the Carrier domain; it reads ELQSDMERYL…QMARNCSLLD (77 aa). Ser-861 is modified (O-(pantetheine 4'-phosphoryl)serine).

The protein belongs to the NRP synthetase family.

Its pathway is mycotoxin biosynthesis. In terms of biological role, nonribosomal peptide synthetase; part of the gene clusters that mediate the biosynthesis of AM-toxins, host-selective toxins (HSTs) causing Alternaria blotch on apple, a worldwide distributed disease. AM-toxins are cyclic depsipeptides containing the 3 residues 2-hydroxy-isovaleric acid (2-HIV), dehydroalanine, L-alanine which are common for all 3 AM-toxins I to III. The fourth precursor is L-alpha-amino-methoxyphenyl-valeric acid (L-Amv) for AM-toxin I, L-alpha-amino-phenyl-valeric acid (L-Apv) for AM-toxin II, and L-alpha-amino-hydroxyphenyl-valeric acid (L-Ahv) for AM-toxin III. AM-toxins have two target sites for affecting susceptible apple cells; they cause invagination of the plasma membrane and electrolyte loss and chloroplast disorganization. The non-ribosomal peptide synthetase AMT1 contains 4 catalytic modules and is responsible for activation of each residue in AM-toxin. The aldo-keto reductase AMT2 catalyzes the conversion of 2-keto-isovaleric acid (2-KIV) to 2-hydroxy-isovaleric acid (2-HIV), one of the precursor residues incorporated by AMT1 during AM-toxin biosynthesis, by reduction of its ketone to an alcohol. The cytochrome P450 monooxygenase AMT3 and the thioesterase AMT4 are also important for AM-toxin production, but their exact function within the AM-toxin biosynthesis are not known yet. Up to 21 proteins (including AMT1 to AMT4) are predicted to be involved in AM-toxin biosynthesis since their expression ishighly up-regulated in AM-toxin-producing cultures. The polypeptide is Nonribosomal peptide synthetase AMT10 (Alternaria alternata (Alternaria rot fungus)).